A 182-amino-acid polypeptide reads, in one-letter code: uncharacterized protein (182 aa).

A helical transmembrane segment spans residues 17-34 (LSLVLFAVLSVLPLGGCA). 2 TPR repeats span residues 89–122 (VDAA…TPDN) and 123–156 (LRAL…NPEN).

It is found in the membrane. This is an uncharacterized protein from Sinorhizobium fredii (strain NBRC 101917 / NGR234).